Here is a 512-residue protein sequence, read N- to C-terminus: Probable anion transporter 3, chloroplastic (512 aa).

Residues 1 to 44 constitute a chloroplast transit peptide; sequence MATVGSLKPLHHSSCSSSFPRNPIVNRKALLGFVFDSARKNQIR. The next 12 membrane-spanning stretches (helical) occupy residues 102-124, 139-159, 167-187, 191-211, 228-248, 250-270, 324-344, 359-379, 396-416, 422-442, 462-482, and 486-506; these read VILTACMMCLCNADRVVMSVAVV, VVQSSFLWGYIFSSVIGGALV, VLAWGVALWSLATLLTPWAAA, LALLCVRAFFGLAEGVAMPSM, VGISMAGFHMGNVVGLLLTPL, LSSIGISGPFILFASLGLLWV, WAIIFANVTNNWGYFVLLSWM, AAWFSALPWATMAISGYYAGA, KIMQSIGFMGPGLSLLCLNFA, AAVFMTIALSLSSFSQAGFLL, AGTLAAIVSTIGTGYFVQWLG, and AFLTVTAFLYFATTVFWLLFA.

It belongs to the major facilitator superfamily. Sodium/anion cotransporter (TC 2.A.1.14) family. Expressed in roots.

It localises to the plastid. Its subcellular location is the chloroplast membrane. In terms of biological role, inorganic phosphate and probable anion transporter. This Arabidopsis thaliana (Mouse-ear cress) protein is Probable anion transporter 3, chloroplastic (ANTR3).